The sequence spans 554 residues: Inactive serine/threonine-protein kinase/endoribonuclease IRE1-like (554 aa).

Positions 1–17 (MWLLAISLVGLLVVVVC) are cleaved as a signal peptide. The tract at residues 36 to 85 (KRDKNSAPRVSASGEDGTKNEQVEKKSDPSGGLGEENEKTNSESKVLSVP) is disordered. A compositionally biased stretch (basic and acidic residues) spans 51–63 (DGTKNEQVEKKSD). One can recognise a Protein kinase domain in the interval 121–408 (LVSTNEMKYG…ATQVLLHPLF (288 aa)). Lys150 is a binding site for ATP. Residues 411 to 554 (SEKRLFFLRE…GEEAFEKYFN (144 aa)) enclose the KEN domain.

This sequence belongs to the protein kinase superfamily. Ser/Thr protein kinase family.

This Arabidopsis thaliana (Mouse-ear cress) protein is Inactive serine/threonine-protein kinase/endoribonuclease IRE1-like.